The sequence spans 314 residues: 4-hydroxy-3-methylbut-2-enyl diphosphate reductase (314 aa).

Position 12 (C12) interacts with [4Fe-4S] cluster. (2E)-4-hydroxy-3-methylbut-2-enyl diphosphate is bound by residues H41 and H74. Residues H41 and H74 each contribute to the dimethylallyl diphosphate site. Residues H41 and H74 each contribute to the isopentenyl diphosphate site. Position 96 (C96) interacts with [4Fe-4S] cluster. Residue H124 coordinates (2E)-4-hydroxy-3-methylbut-2-enyl diphosphate. Residue H124 participates in dimethylallyl diphosphate binding. H124 contacts isopentenyl diphosphate. The active-site Proton donor is E126. Position 167 (T167) interacts with (2E)-4-hydroxy-3-methylbut-2-enyl diphosphate. Residue C197 coordinates [4Fe-4S] cluster. (2E)-4-hydroxy-3-methylbut-2-enyl diphosphate-binding residues include S225, S226, N227, and S269. The dimethylallyl diphosphate site is built by S225, S226, N227, and S269. Isopentenyl diphosphate is bound by residues S225, S226, N227, and S269.

This sequence belongs to the IspH family. The cofactor is [4Fe-4S] cluster.

The catalysed reaction is isopentenyl diphosphate + 2 oxidized [2Fe-2S]-[ferredoxin] + H2O = (2E)-4-hydroxy-3-methylbut-2-enyl diphosphate + 2 reduced [2Fe-2S]-[ferredoxin] + 2 H(+). It carries out the reaction dimethylallyl diphosphate + 2 oxidized [2Fe-2S]-[ferredoxin] + H2O = (2E)-4-hydroxy-3-methylbut-2-enyl diphosphate + 2 reduced [2Fe-2S]-[ferredoxin] + 2 H(+). Its pathway is isoprenoid biosynthesis; dimethylallyl diphosphate biosynthesis; dimethylallyl diphosphate from (2E)-4-hydroxy-3-methylbutenyl diphosphate: step 1/1. It participates in isoprenoid biosynthesis; isopentenyl diphosphate biosynthesis via DXP pathway; isopentenyl diphosphate from 1-deoxy-D-xylulose 5-phosphate: step 6/6. Functionally, catalyzes the conversion of 1-hydroxy-2-methyl-2-(E)-butenyl 4-diphosphate (HMBPP) into a mixture of isopentenyl diphosphate (IPP) and dimethylallyl diphosphate (DMAPP). Acts in the terminal step of the DOXP/MEP pathway for isoprenoid precursor biosynthesis. This Glaesserella parasuis serovar 5 (strain SH0165) (Haemophilus parasuis) protein is 4-hydroxy-3-methylbut-2-enyl diphosphate reductase.